The primary structure comprises 23 residues: Alpha-amanitin proprotein (23 aa).

Ile1 is modified ((3R,4R)-4,5-dihydroxyisoleucine; in form alpha-amanitin). Position 1 is a (3R,4S)-4-hydroxyisoleucine; in form gamma-amanitin (Ile1). Positions 1–8 form a cross-link, cyclopeptide (Ile-Pro); the sequence is IWGIGCNP. A cross-link (2'-cysteinyl-6'-hydroxytryptophan sulfoxide (Trp-Cys)) is located at residues 2–6; that stretch reads WGIGC. A 4-hydroxyproline modification is found at Pro8. Positions 9–23 are excised as a propeptide; sequence CVGDEVTALITRGEA.

It belongs to the MSDIN fungal toxin family. Post-translationally, processed by the macrocyclase-peptidase enzyme POPB to yield a toxic cyclic decapeptide. POPB first removes 10 residues from the N-terminus. Conformational trapping of the remaining peptide forces the enzyme to release this intermediate rather than proceed to macrocyclization. The enzyme rebinds the remaining peptide in a different conformation and catalyzes macrocyclization of the N-terminal 8 residues.

Its function is as follows. Major toxin belonging to the bicyclic octapeptides amatoxins that acts by binding non-competitively to RNA polymerase II and greatly slowing the elongation of transcripts from target promoters. The sequence is that of Alpha-amanitin proprotein from Amanita fuligineoides.